A 105-amino-acid polypeptide reads, in one-letter code: Large ribosomal subunit protein uL24 (105 aa).

Belongs to the universal ribosomal protein uL24 family. As to quaternary structure, part of the 50S ribosomal subunit.

One of two assembly initiator proteins, it binds directly to the 5'-end of the 23S rRNA, where it nucleates assembly of the 50S subunit. Functionally, one of the proteins that surrounds the polypeptide exit tunnel on the outside of the subunit. This chain is Large ribosomal subunit protein uL24, found in Azoarcus sp. (strain BH72).